The primary structure comprises 501 residues: Tetrachloroethene reductive dehalogenase (501 aa).

A signal peptide (tat-type signal) is located at residues Met-1–Ala-37. Corrinoid contacts are provided by residues Ala-74, Tyr-207, Asn-309–Ser-314, Met-329–Cys-332, and Val-341–Leu-343. The region spanning Lys-356 to Arg-386 is the 4Fe-4S ferredoxin-type 1 domain. The [4Fe-4S] cluster site is built by Cys-366, Cys-369, Cys-372, and Cys-376. His-394 to Gln-401 contributes to the corrinoid binding site. Cys-409 is a [4Fe-4S] cluster binding site. Tyr-419 provides a ligand contact to corrinoid. Residues Cys-420, Cys-423, and Cys-427 each contribute to the [4Fe-4S] cluster site. One can recognise a 4Fe-4S ferredoxin-type 2 domain in the interval Cys-420–Gly-439.

The protein belongs to the PceA family. As to quaternary structure, monomer. Requires [4Fe-4S] cluster as cofactor. The cofactor is corrinoid. Post-translationally, predicted to be exported by the Tat system. The position of the signal peptide cleavage has not been experimentally proven.

It localises to the cytoplasm. It is found in the cell inner membrane. It carries out the reaction trichloroethene + chloride + A + H(+) = tetrachloroethene + AH2. The catalysed reaction is trichloroethene + AH2 = (Z)-1,2-dichloroethene + chloride + A + H(+). Its activity is regulated as follows. Both the processed and unprocessed enzymes are catalytically active. PCE-dependent growth and PceA activity are inhibited in the presence of high concentrations of 5,6-dimethylbenzimidazole (DMB), probably due to the formation a DMB-containing nor-B12 cofactor. Dechlorination of PCE is stimulated by ammonium ions. Activity is inhibited by chlorinated methanes. Functionally, catalyzes the reductive dechlorination of tetrachloroethene (PCE) to trichloroethene (TCE) and of trichloroethene to cis-1,2-dichloroethene (DCE). In addition, trans-1,3-dichloropropene, 1,1,3-trichloropropene and 2,3-dichloropropene are reduced to a mixture of mono-chloropropenes, 1,1-dichloropropene, and 2-chloropropene, respectively. Is also able to convert brominated phenols such as 4-bromophenol (4-BP), 2,4-dibromophenol (2,4-DBP) and 2,4,6-tribromophenol (2,4,6-TBP). Utilizes formate or pyruvate as electron donors. Titanium(III) citrate could also serve as electron donor. Reduced methyl viologen can act as the artificial electron donor. The protein is Tetrachloroethene reductive dehalogenase of Sulfurospirillum multivorans (Dehalospirillum multivorans).